Reading from the N-terminus, the 211-residue chain is FMN-dependent NADH:quinone oxidoreductase 2 (211 aa).

17 to 19 (SYS) contacts FMN.

Belongs to the azoreductase type 1 family. As to quaternary structure, homodimer. FMN serves as cofactor.

The enzyme catalyses 2 a quinone + NADH + H(+) = 2 a 1,4-benzosemiquinone + NAD(+). It carries out the reaction N,N-dimethyl-1,4-phenylenediamine + anthranilate + 2 NAD(+) = 2-(4-dimethylaminophenyl)diazenylbenzoate + 2 NADH + 2 H(+). With respect to regulation, strongly inhibited by Pb(2+) and weakly inhibited by Cu(2+), Hg(2+) and Fe(2+). Stable in presence of Ag(+). Quinone reductase that provides resistance to thiol-specific stress caused by electrophilic quinones. Contributes to resistance to 2-methylhydroquinone (2-MHQ) and catechol. Exhibits NADH-dependent 2,6-dichloroindophenol (DCIP) oxidoreductase activity. Its function is as follows. Also exhibits azoreductase activity. Catalyzes the reductive cleavage of the azo bond in aromatic azo compounds to the corresponding amines. Can reduce methyl red. The polypeptide is FMN-dependent NADH:quinone oxidoreductase 2 (Bacillus subtilis (strain 168)).